A 259-amino-acid polypeptide reads, in one-letter code: Submandibular glandular kallikrein-9 (259 aa).

The N-terminal stretch at 1 to 18 (MWFLILFLALSLGQIDAA) is a signal peptide. Residues 19–24 (PPGQSR) constitute a propeptide, activation peptide. Positions 25 to 256 (VVGGYNCETN…FTSWIKKVMK (232 aa)) constitute a Peptidase S1 domain. Cystine bridges form between C31-C171, C48-C64, C150-C217, C182-C196, and C207-C232. The active-site Charge relay system is H63. N106 is a glycosylation site (N-linked (GlcNAc...) asparagine). D118 (charge relay system) is an active-site residue. S211 (charge relay system) is an active-site residue.

It belongs to the peptidase S1 family. Kallikrein subfamily. As to quaternary structure, heterodimer of a light chain and heavy chain linked by a disulfide bond.

It catalyses the reaction Preferential cleavage of Arg-|-Xaa bonds in small molecule substrates. Highly selective action to release kallidin (lysyl-bradykinin) from kininogen involves hydrolysis of Met-|-Xaa or Leu-|-Xaa.. Glandular kallikreins cleave Met-Lys and Arg-Ser bonds in kininogen to release Lys-bradykinin. This enzyme has a vasoconstrictor activity. KLK-9 has both a chymotrypsin-like and a trypsin-like properties. The protein is Submandibular glandular kallikrein-9 (Klk9) of Rattus norvegicus (Rat).